Here is a 156-residue protein sequence, read N- to C-terminus: Ribosomal RNA large subunit methyltransferase H (156 aa).

S-adenosyl-L-methionine contacts are provided by residues Leu-73, Gly-104, and 123–128; that span reads LSSLTL.

Belongs to the RNA methyltransferase RlmH family. As to quaternary structure, homodimer.

The protein localises to the cytoplasm. The catalysed reaction is pseudouridine(1915) in 23S rRNA + S-adenosyl-L-methionine = N(3)-methylpseudouridine(1915) in 23S rRNA + S-adenosyl-L-homocysteine + H(+). Functionally, specifically methylates the pseudouridine at position 1915 (m3Psi1915) in 23S rRNA. This chain is Ribosomal RNA large subunit methyltransferase H, found in Neisseria meningitidis serogroup A / serotype 4A (strain DSM 15465 / Z2491).